A 226-amino-acid chain; its full sequence is N-(5'-phosphoribosyl)anthranilate isomerase (226 aa).

The protein belongs to the TrpF family.

It carries out the reaction N-(5-phospho-beta-D-ribosyl)anthranilate = 1-(2-carboxyphenylamino)-1-deoxy-D-ribulose 5-phosphate. The protein operates within amino-acid biosynthesis; L-tryptophan biosynthesis; L-tryptophan from chorismate: step 3/5. The sequence is that of N-(5'-phosphoribosyl)anthranilate isomerase from Synechococcus sp. (strain JA-3-3Ab) (Cyanobacteria bacterium Yellowstone A-Prime).